Here is a 208-residue protein sequence, read N- to C-terminus: 7-carboxy-7-deazaguanine synthase (208 aa).

Substrate is bound by residues 23–25 (LQG) and Arg-38. The region spanning 29–208 (WAGGNAFFIR…LQTHKYLGVR (180 aa)) is the Radical SAM core domain. Cys-42, Cys-46, and Cys-49 together coordinate [4Fe-4S] cluster. Residue Thr-83 coordinates substrate. S-adenosyl-L-methionine is bound by residues Gly-85 and 126 to 128 (SPK).

This sequence belongs to the radical SAM superfamily. 7-carboxy-7-deazaguanine synthase family. In terms of assembly, homodimer. The cofactor is [4Fe-4S] cluster. S-adenosyl-L-methionine is required as a cofactor. It depends on Mg(2+) as a cofactor.

The enzyme catalyses 6-carboxy-5,6,7,8-tetrahydropterin + H(+) = 7-carboxy-7-deazaguanine + NH4(+). It functions in the pathway purine metabolism; 7-cyano-7-deazaguanine biosynthesis. Functionally, catalyzes the complex heterocyclic radical-mediated conversion of 6-carboxy-5,6,7,8-tetrahydropterin (CPH4) to 7-carboxy-7-deazaguanine (CDG), a step common to the biosynthetic pathways of all 7-deazapurine-containing compounds. The chain is 7-carboxy-7-deazaguanine synthase from Synechocystis sp. (strain ATCC 27184 / PCC 6803 / Kazusa).